Reading from the N-terminus, the 676-residue chain is F420-dependent formate dehydrogenase 2 subunit alpha (676 aa).

A 4Fe-4S Mo/W bis-MGD-type domain is found at 4–60 (FKVVHTICPYCGTGCGIDLVVKDGKVVDSHPFKRHPVNEGKVCIKGNYCYEFVHSED). Positions 11, 14, 18, and 46 each coordinate [4Fe-4S] cluster. Position 133 (Sec133) is a non-standard amino acid, selenocysteine.

This sequence belongs to the prokaryotic molybdopterin-containing oxidoreductase family. Dimer of an alpha (FdhA2) and a beta (FdhB2) subunit. [4Fe-4S] cluster serves as cofactor. Mo-bis(molybdopterin guanine dinucleotide) is required as a cofactor. The cofactor is Zn(2+).

The enzyme catalyses oxidized coenzyme F420-(gamma-L-Glu)(n) + formate + 2 H(+) = reduced coenzyme F420-(gamma-L-Glu)(n) + CO2. In terms of biological role, catalyzes the oxidation of formate to carbon dioxide, with coenzyme F420 as the electron acceptor. In vitro can also use methyl viologen as electron acceptor. This is F420-dependent formate dehydrogenase 2 subunit alpha from Methanococcus maripaludis (strain DSM 14266 / JCM 13030 / NBRC 101832 / S2 / LL).